The primary structure comprises 247 residues: OCIA domain-containing protein 1 (247 aa).

The region spanning 1-112 (MNGRADFREP…KKLENSPLGE (112 aa)) is the OCIA domain. S108, S116, and S123 each carry phosphoserine. Disordered stretches follow at residues 113–153 (ALRS…ADNI) and 167–230 (SASM…MQER). 2 stretches are compositionally biased toward polar residues: residues 136 to 146 (SNVSGQSSFGT) and 168 to 177 (ASMNESTPTG). Basic and acidic residues-rich tracts occupy residues 192-210 (ESPKRKGVTYEELRSKNRE) and 218-230 (HKTDPSVRPMQER). S193 is subject to Phosphoserine.

It belongs to the OCIAD1 family. In terms of assembly, interacts with OCIAD2. Interacts with STAT3. In terms of tissue distribution, expressed at high levels in the brain and at lower levels in the heart, ovary, testis and kidney. Expression is strongest in embryonic stem cells and in the blood vessels.

The protein resides in the endosome. In terms of biological role, maintains stem cell potency. Increases STAT3 phosphorylation and controls ERK phosphorylation. May act as a scaffold, increasing STAT3 recruitment onto endosomes. The sequence is that of OCIA domain-containing protein 1 from Mus musculus (Mouse).